Reading from the N-terminus, the 453-residue chain is UDP-N-acetylmuramoylalanine--D-glutamate ligase (453 aa).

117-123 (GANGKST) lines the ATP pocket.

Belongs to the MurCDEF family.

It localises to the cytoplasm. The catalysed reaction is UDP-N-acetyl-alpha-D-muramoyl-L-alanine + D-glutamate + ATP = UDP-N-acetyl-alpha-D-muramoyl-L-alanyl-D-glutamate + ADP + phosphate + H(+). It functions in the pathway cell wall biogenesis; peptidoglycan biosynthesis. Functionally, cell wall formation. Catalyzes the addition of glutamate to the nucleotide precursor UDP-N-acetylmuramoyl-L-alanine (UMA). This is UDP-N-acetylmuramoylalanine--D-glutamate ligase from Methylobacillus flagellatus (strain ATCC 51484 / DSM 6875 / VKM B-1610 / KT).